The sequence spans 226 residues: Cytidylate kinase (226 aa).

10–18 (GPASSGKST) serves as a coordination point for ATP.

Belongs to the cytidylate kinase family. Type 1 subfamily.

It is found in the cytoplasm. The enzyme catalyses CMP + ATP = CDP + ADP. The catalysed reaction is dCMP + ATP = dCDP + ADP. The chain is Cytidylate kinase from Streptococcus uberis (strain ATCC BAA-854 / 0140J).